The primary structure comprises 321 residues: Glucokinase (321 aa).

An ATP-binding site is contributed by 8 to 13 (GDVGGT).

This sequence belongs to the bacterial glucokinase family.

It localises to the cytoplasm. It carries out the reaction D-glucose + ATP = D-glucose 6-phosphate + ADP + H(+). This chain is Glucokinase, found in Psychromonas ingrahamii (strain DSM 17664 / CCUG 51855 / 37).